A 238-amino-acid polypeptide reads, in one-letter code: Lipoprotein-releasing system ATP-binding protein LolD (238 aa).

Residues 6–238 (LVCQGIRKVY…RSSLAQEMEA (233 aa)) form the ABC transporter domain. 42-49 (GSSGSGKS) contributes to the ATP binding site.

This sequence belongs to the ABC transporter superfamily. Lipoprotein translocase (TC 3.A.1.125) family. As to quaternary structure, the complex is composed of two ATP-binding proteins (LolD) and two transmembrane proteins (LolC and LolE).

The protein localises to the cell inner membrane. In terms of biological role, part of the ABC transporter complex LolCDE involved in the translocation of mature outer membrane-directed lipoproteins, from the inner membrane to the periplasmic chaperone, LolA. Responsible for the formation of the LolA-lipoprotein complex in an ATP-dependent manner. The chain is Lipoprotein-releasing system ATP-binding protein LolD from Aliivibrio fischeri (strain ATCC 700601 / ES114) (Vibrio fischeri).